The primary structure comprises 252 residues: Ubiquinone biosynthesis O-methyltransferase (252 aa).

S-adenosyl-L-methionine is bound by residues arginine 45, glycine 76, aspartate 97, and methionine 141.

It belongs to the methyltransferase superfamily. UbiG/COQ3 family.

It carries out the reaction a 3-demethylubiquinol + S-adenosyl-L-methionine = a ubiquinol + S-adenosyl-L-homocysteine + H(+). The enzyme catalyses a 3-(all-trans-polyprenyl)benzene-1,2-diol + S-adenosyl-L-methionine = a 2-methoxy-6-(all-trans-polyprenyl)phenol + S-adenosyl-L-homocysteine + H(+). Its pathway is cofactor biosynthesis; ubiquinone biosynthesis. In terms of biological role, O-methyltransferase that catalyzes the 2 O-methylation steps in the ubiquinone biosynthetic pathway. This chain is Ubiquinone biosynthesis O-methyltransferase, found in Caulobacter vibrioides (strain ATCC 19089 / CIP 103742 / CB 15) (Caulobacter crescentus).